A 234-amino-acid polypeptide reads, in one-letter code: Ubiquitin domain-containing protein 2 (234 aa).

The segment at 1–46 (MGGCVGAQHDSSGSLNENSDGTGVALGRNQPLKKEKPKWKSDYPMT) is disordered. Polar residues predominate over residues 9 to 21 (HDSSGSLNENSDG). The segment covering 32–41 (LKKEKPKWKS) has biased composition (basic and acidic residues). The region spanning 152 to 227 (SQLRLRLSTG…VQVIVSQPVQ (76 aa)) is the Ubiquitin-like domain.

It localises to the cytoplasm. This Mus musculus (Mouse) protein is Ubiquitin domain-containing protein 2 (Ubtd2).